Here is a 257-residue protein sequence, read N- to C-terminus: Acetylglutamate kinase (257 aa).

Substrate is bound by residues 43–44, arginine 65, and asparagine 157; that span reads GG.

This sequence belongs to the acetylglutamate kinase family. ArgB subfamily.

Its subcellular location is the cytoplasm. The catalysed reaction is N-acetyl-L-glutamate + ATP = N-acetyl-L-glutamyl 5-phosphate + ADP. The protein operates within amino-acid biosynthesis; L-arginine biosynthesis; N(2)-acetyl-L-ornithine from L-glutamate: step 2/4. Functionally, catalyzes the ATP-dependent phosphorylation of N-acetyl-L-glutamate. This is Acetylglutamate kinase from Actinobacillus succinogenes (strain ATCC 55618 / DSM 22257 / CCUG 43843 / 130Z).